The primary structure comprises 225 residues: Cell wall mannoprotein CIS3 (225 aa).

The first 21 residues, 1–21 (MQFKNVALAASVAALSATASA), serve as a signal peptide directing secretion. Residues 22–64 (EGYTPGEPWSTLTPTGSISCGAAEYTTTFGIAVQAITSSKAKR) constitute a propeptide that is removed on maturation. Residues 65-82 (DVISQIGDGQVQATSAAA) form a PIR1/2/3 repeat. Serine 68 carries O-linked (Man) serine glycosylation. Residue threonine 78 is glycosylated (O-linked (Man) threonine). The span at 78–92 (TSAAATDSQVQASST) shows a compositional bias: polar residues. The disordered stretch occupies residues 78–128 (TSAAATDSQVQASSTATPTSSEKISSSASKTSSTNATSSSCATPSLKDSSC). Residues 93–122 (ATPTSSEKISSSASKTSSTNATSSSCATPS) show a composition bias toward low complexity. 4 O-linked (Man) serine glycosylation sites follow: serine 102, serine 103, serine 104, and serine 106. Threonine 108 carries an O-linked (Man) threonine glycan. A glycan (O-linked (Man) serine) is linked at serine 109. O-linked (Man) threonine glycosylation is found at threonine 111 and threonine 114. O-linked (Man) serine glycans are attached at residues serine 115 and serine 116.

Belongs to the PIR protein family. Post-translationally, covalently linked to beta-1,3-glucan of the inner cell wall layer via an alkali-sensitive ester linkage between the gamma-carboxyl group of glutamic acid, arising from Gln-74 within the PIR1/2/3 repeat, and hydroxyl groups of glucoses of beta-1,3-glucan chains. In terms of processing, extensively O-mannosylated.

The protein localises to the secreted. The protein resides in the cell wall. Functionally, component of the outer cell wall layer. Required for stability of the cell wall and for optimal growth. Required for resistance against several antifungal and cell wall-perturbing agents. The sequence is that of Cell wall mannoprotein CIS3 (CIS3) from Saccharomyces cerevisiae (strain AWRI1631) (Baker's yeast).